Here is a 363-residue protein sequence, read N- to C-terminus: MMHIIDRLTRPVLFAFDPERAHELSIAALKTGIPFCSGGVQNSKLAVSVAGLNFPNPIGMAAGYDKNAEIPDALLNLGFGFAECGTVTPKPQEGNPRPRIFRLTRDRAVINRLGFNNEGHAQALARLSLRKGKSGIVGVNIGANRDSSDRMADYEEGVRTFAAVASYLTINISSPNTTGLRGLQDRENLSELLQRVMRVRNEQAALIKRKVPVFLKIAPDLSEEALADIAQEVLEKGLDGLIVSNTTLSREGVSAPAASETGGLSGEPLFERSTIVLAKMRRLVGPALPIIGVGGVHSAETALEKMRAGADLVQLYTGMVFAGPGLPARIVSRLAAYAEANGLNSIAEIRDSNIKPWADRPLA.

FMN-binding positions include 62–66 (AGYDK) and threonine 86. Lysine 66 is a substrate binding site. Substrate is bound at residue 111–115 (NRLGF). The FMN site is built by asparagine 140 and asparagine 171. Position 171 (asparagine 171) interacts with substrate. Serine 174 functions as the Nucleophile in the catalytic mechanism. Position 176 (asparagine 176) interacts with substrate. FMN contacts are provided by lysine 216 and serine 244. 245-246 (NT) is a substrate binding site. FMN-binding positions include glycine 266, glycine 295, and 316–317 (YT).

The protein belongs to the dihydroorotate dehydrogenase family. Type 2 subfamily. As to quaternary structure, monomer. It depends on FMN as a cofactor.

It localises to the cell membrane. The catalysed reaction is (S)-dihydroorotate + a quinone = orotate + a quinol. It functions in the pathway pyrimidine metabolism; UMP biosynthesis via de novo pathway; orotate from (S)-dihydroorotate (quinone route): step 1/1. Catalyzes the conversion of dihydroorotate to orotate with quinone as electron acceptor. The polypeptide is Dihydroorotate dehydrogenase (quinone) (Chelativorans sp. (strain BNC1)).